A 66-amino-acid chain; its full sequence is uncharacterized protein (66 aa).

Residues valine 5–valine 59 form the HTH cro/C1-type domain. The segment at residues glutamine 16–lysine 35 is a DNA-binding region (H-T-H motif).

This is an uncharacterized protein from Bacillus subtilis (strain 168).